A 1026-amino-acid chain; its full sequence is Exportin-T (1026 aa).

Belongs to the exportin family.

Its subcellular location is the nucleus. It is found in the cytoplasm. TRNA nucleus export receptor which facilitates tRNA translocation across the nuclear pore complex. Involved in pre-tRNA splicing, probably by affecting the interaction of pre-tRNA with splicing endonuclease. The polypeptide is Exportin-T (los1) (Neurospora crassa (strain ATCC 24698 / 74-OR23-1A / CBS 708.71 / DSM 1257 / FGSC 987)).